The following is a 1102-amino-acid chain: Protein MMS22-like (1102 aa).

The protein belongs to the MMS22 family. MMS22L subfamily.

It localises to the nucleus. Its subcellular location is the chromosome. Its function is as follows. Involved in recombination-dependent repair of stalled or collapsed replication forks. This chain is Protein MMS22-like, found in Drosophila melanogaster (Fruit fly).